Here is a 238-residue protein sequence, read N- to C-terminus: Ribonuclease 3 (238 aa).

In terms of domain architecture, RNase III spans 17 to 140; sequence YATLEKALGY…LMAGVYLEAG (124 aa). Glutamate 53 contributes to the Mg(2+) binding site. The active site involves aspartate 57. Residues serine 126 and glutamate 129 each contribute to the Mg(2+) site. Glutamate 129 is a catalytic residue. The DRBM domain maps to 167 to 236; sequence DYKTALQELT…AYQALQKLKE (70 aa).

This sequence belongs to the ribonuclease III family. As to quaternary structure, homodimer. The cofactor is Mg(2+).

The protein localises to the cytoplasm. The enzyme catalyses Endonucleolytic cleavage to 5'-phosphomonoester.. In terms of biological role, digests double-stranded RNA. Involved in the processing of primary rRNA transcript to yield the immediate precursors to the large and small rRNAs (23S and 16S). Processes some mRNAs, and tRNAs when they are encoded in the rRNA operon. Processes pre-crRNA and tracrRNA of type II CRISPR loci if present in the organism. This chain is Ribonuclease 3, found in Helicobacter pylori (strain Shi470).